A 313-amino-acid chain; its full sequence is Secretory carrier-associated membrane protein 4 (313 aa).

Residues 1–69 form a disordered region; it reads MAGRSRYDNP…LPPEPADFYN (69 aa). Residues 1–148 are Cytoplasmic-facing; sequence MAGRSRYDNP…EIPVHLQRTQ (148 aa). Residues 85 to 116 adopt a coiled-coil conformation; that stretch reads MKTREKELLAKEAELNRREKEIKRREEAAARA. Transmembrane regions (helical) follow at residues 149-169, 181-201, 216-236, and 255-275; these read YVAF…IICV, IWFL…YLWY, FGWF…AAVS, and LIGN…MFCL. The Cytoplasmic portion of the chain corresponds to 276–313; the sequence is ESLLSMWVIQRVYLYFRGSGKEAEMKREAARSAARAAF.

It belongs to the SCAMP family.

The protein resides in the cell membrane. Its subcellular location is the cytoplasmic vesicle. The protein localises to the secretory vesicle membrane. Functionally, probably involved in membrane trafficking. The polypeptide is Secretory carrier-associated membrane protein 4 (SCAMP4) (Oryza sativa subsp. japonica (Rice)).